A 379-amino-acid polypeptide reads, in one-letter code: tRNA 2-selenouridine synthase (379 aa).

Residues 17–140 (FLSGAPLLDT…MRRFLIESLE (124 aa)) enclose the Rhodanese domain. Residue C100 is the S-selanylcysteine intermediate of the active site.

It belongs to the SelU family. As to quaternary structure, monomer.

The enzyme catalyses 5-methylaminomethyl-2-thiouridine(34) in tRNA + selenophosphate + (2E)-geranyl diphosphate + H2O + H(+) = 5-methylaminomethyl-2-selenouridine(34) in tRNA + (2E)-thiogeraniol + phosphate + diphosphate. The catalysed reaction is 5-methylaminomethyl-2-thiouridine(34) in tRNA + (2E)-geranyl diphosphate = 5-methylaminomethyl-S-(2E)-geranyl-thiouridine(34) in tRNA + diphosphate. It carries out the reaction 5-methylaminomethyl-S-(2E)-geranyl-thiouridine(34) in tRNA + selenophosphate + H(+) = 5-methylaminomethyl-2-(Se-phospho)selenouridine(34) in tRNA + (2E)-thiogeraniol. It catalyses the reaction 5-methylaminomethyl-2-(Se-phospho)selenouridine(34) in tRNA + H2O = 5-methylaminomethyl-2-selenouridine(34) in tRNA + phosphate. Functionally, involved in the post-transcriptional modification of the uridine at the wobble position (U34) of tRNA(Lys), tRNA(Glu) and tRNA(Gln). Catalyzes the conversion of 2-thiouridine (S2U-RNA) to 2-selenouridine (Se2U-RNA). Acts in a two-step process involving geranylation of 2-thiouridine (S2U) to S-geranyl-2-thiouridine (geS2U) and subsequent selenation of the latter derivative to 2-selenouridine (Se2U) in the tRNA chain. The sequence is that of tRNA 2-selenouridine synthase from Hahella chejuensis (strain KCTC 2396).